The chain runs to 1624 residues: Latent-transforming growth factor beta-binding protein 4 (1624 aa).

The N-terminal stretch at 1–27 is a signal peptide; that stretch reads MPRPGTSGRRPLLLVLLLPLFAAATSA. A disordered region spans residues 125-146; it reads RRPRGPGGRGLLRRRPPQRAPA. The EGF-like 1 domain occupies 149–181; the sequence is APVLCPLICHNGGVCVKPDRCLCPPDFAGKFCQ. 6 disulfide bridges follow: cysteine 153-cysteine 163, cysteine 157-cysteine 169, cysteine 171-cysteine 180, cysteine 289-cysteine 311, cysteine 298-cysteine 324, and cysteine 312-cysteine 327. The TB 1 domain occupies 287–339; the sequence is GYCFRELRGGECASPLPGLRTQEVCCRGAGLAWGVHDCQLCSERLGNSERVSA. N-linked (GlcNAc...) asparagine glycosylation occurs at asparagine 352. The 41-residue stretch at 357-397 folds into the EGF-like 2; calcium-binding domain; the sequence is DVDECATGGRCQHGECANTRGGYTCVCPDGFLLDSSRSSCI. 7 cysteine pairs are disulfide-bonded: cysteine 361–cysteine 372, cysteine 367–cysteine 381, cysteine 383–cysteine 396, cysteine 409–cysteine 431, cysteine 418–cysteine 444, cysteine 432–cysteine 447, and cysteine 433–cysteine 459. The 53-residue stretch at 407–459 folds into the TB 2 domain; sequence GPCFRVLRDGGCSLPILRNITKQICCCSRVGKAWGRGCQLCPPFGSEGFREIC. The N-linked (GlcNAc...) asparagine glycan is linked to asparagine 425. The disordered stretch occupies residues 474–546; the sequence is YNTRPLGQEP…PEIPESGPSS (73 aa). The segment covering 487 to 500 has biased composition (polar residues); it reads SLSQPRTLPATSRP. Basic and acidic residues predominate over residues 508-522; the sequence is HRLEPRPEPRPDPRP. The 42-residue stretch at 545–586 folds into the EGF-like 3 domain; the sequence is SSGMCQRNPQVCGPGRCISRPSGYTCACDSGFRLSPQGTRCI. 30 disulfide bridges follow: cysteine 549–cysteine 561, cysteine 556–cysteine 570, cysteine 572–cysteine 585, cysteine 591–cysteine 603, cysteine 598–cysteine 612, cysteine 614–cysteine 627, cysteine 633–cysteine 645, cysteine 640–cysteine 654, cysteine 656–cysteine 669, cysteine 675–cysteine 687, cysteine 682–cysteine 696, cysteine 698–cysteine 707, cysteine 714–cysteine 726, cysteine 721–cysteine 735, cysteine 737–cysteine 750, cysteine 756–cysteine 768, cysteine 763–cysteine 777, cysteine 779–cysteine 792, cysteine 838–cysteine 851, cysteine 845–cysteine 860, cysteine 862–cysteine 876, cysteine 882–cysteine 894, cysteine 888–cysteine 903, cysteine 905–cysteine 918, cysteine 924–cysteine 935, cysteine 930–cysteine 944, cysteine 946–cysteine 959, cysteine 1053–cysteine 1065, cysteine 1059–cysteine 1074, and cysteine 1076–cysteine 1089. Residues 587–628 form the EGF-like 4; calcium-binding domain; it reads DVDECRRVPPPCAPGRCENSPGSFRCVCGPGFRAGPRAAECL. Positions 629-670 constitute an EGF-like 5; calcium-binding domain; sequence DVDECHRVPPPCDLGRCENTPGSFLCVCPAGYQAAPHGASCQ. The 38-residue stretch at 671–708 folds into the EGF-like 6; calcium-binding domain; the sequence is DVDECTQSPGLCGRGACKNLPGSFRCVCPAGFRGSACE. The EGF-like 7; calcium-binding domain maps to 710–751; that stretch reads DVDECAQEPPPCGPGRCDNTAGSFHCACPAGFRSRGPGAPCQ. In terms of domain architecture, EGF-like 8; calcium-binding spans 752–793; sequence DVDECARSPPPCTYGRCENTEGSFQCVCPMGFQPNTAGSECE. In terms of domain architecture, EGF-like 9; calcium-binding spans 834–877; it reads DVDECSSGAPPCGPHGHCTNTEGSFRCSCAPGYRAPSGRPGPCA. The 42-residue stretch at 878–919 folds into the EGF-like 10; calcium-binding domain; the sequence is DVNECLEGDFCFPHGECLNTDGSFACTCAPGYRPGPRGASCL. The EGF-like 11; calcium-binding domain occupies 920 to 960; it reads DVDECSEEDLCQSGICTNTDGSFECICPPGHRAGPDLASCL. Residues 1049–1090 form the EGF-like 12; calcium-binding domain; the sequence is DVDECRNRSFCGAHAVCQNLPGSFQCLCDQGYEGARDGRHCV. Asparagine 1055 carries N-linked (GlcNAc...) asparagine glycosylation. Residues 1130–1179 form a disordered region; that stretch reads GRCVPPRTSAGTFPGSQPQAPASPVLPARPPPPPLPRRPSTPRQGPVGSG. Residues 1138–1149 are compositionally biased toward polar residues; the sequence is SAGTFPGSQPQA. Residues 1156-1168 are compositionally biased toward pro residues; sequence PARPPPPPLPRRP. The TB 3 domain maps to 1181 to 1235; that stretch reads RECYFDTAAPDACDNILARNVTWQECCCTVGEGWGSGCRIQQCPGTETAEYQSLC. 10 disulfide bridges follow: cysteine 1183-cysteine 1206, cysteine 1193-cysteine 1218, cysteine 1207-cysteine 1223, cysteine 1208-cysteine 1235, cysteine 1257-cysteine 1270, cysteine 1265-cysteine 1279, cysteine 1281-cysteine 1294, cysteine 1300-cysteine 1312, cysteine 1307-cysteine 1321, and cysteine 1323-cysteine 1336. Asparagine 1200 carries N-linked (GlcNAc...) asparagine glycosylation. An EGF-like 13; calcium-binding domain is found at 1253-1295; the sequence is DVDECQLFRDQVCKSGVCVNTAPGYSCYCSNGYYYHTQRLECI. An EGF-like 14; calcium-binding domain is found at 1296 to 1337; that stretch reads DNDECADEEPACEGGRCVNTVGSYHCTCEPPLVLDGSQRRCV. Asparagine 1339 carries an N-linked (GlcNAc...) asparagine glycan. In terms of domain architecture, TB 4 spans 1349–1402; the sequence is GVCWQEVGADLVCSHPRLDRQATYTECCCLYGEAWGMDCALCPAQDSDDFEALC. 4 cysteine pairs are disulfide-bonded: cysteine 1351–cysteine 1375, cysteine 1361–cysteine 1387, cysteine 1376–cysteine 1390, and cysteine 1377–cysteine 1402. Positions 1446 to 1458 are enriched in pro residues; the sequence is ALPYDPYPPPPGP. The tract at residues 1446–1524 is disordered; sequence ALPYDPYPPP…PPEGGSYAGS (79 aa). The span at 1501–1510 shows a compositional bias: basic and acidic residues; it reads RSRDTRRSFP. EGF-like domains are found at residues 1533 to 1573 and 1574 to 1618; these read EAEE…MACV and DINE…HHCA. 6 cysteine pairs are disulfide-bonded: cysteine 1537/cysteine 1548, cysteine 1543/cysteine 1557, cysteine 1559/cysteine 1572, cysteine 1578/cysteine 1593, cysteine 1588/cysteine 1602, and cysteine 1604/cysteine 1617.

It belongs to the LTBP family. As to quaternary structure, forms part of the large latent transforming growth factor beta precursor complex; removal is essential for activation of complex. Interacts with LTBP1 and TGFB1. Interacts with EFEMP2; this interaction promotes fibrillar deposition of EFEMP2. Contains hydroxylated asparagine residues. Highly expressed in heart, skeletal muscle, pancreas, uterus, and small intestine. Weakly expressed in placenta and lung.

The protein resides in the secreted. It is found in the extracellular space. It localises to the extracellular matrix. Its function is as follows. Key regulator of transforming growth factor beta (TGFB1, TGFB2 and TGFB3) that controls TGF-beta activation by maintaining it in a latent state during storage in extracellular space. Associates specifically via disulfide bonds with the Latency-associated peptide (LAP), which is the regulatory chain of TGF-beta, and regulates integrin-dependent activation of TGF-beta. The chain is Latent-transforming growth factor beta-binding protein 4 (LTBP4) from Homo sapiens (Human).